We begin with the raw amino-acid sequence, 400 residues long: tRNA-specific 2-thiouridylase MnmA (400 aa).

Residues 19-26 (AMSGGVDS) and Leu45 contribute to the ATP site. Cys113 (nucleophile) is an active-site residue. Cys113 and Cys210 are disulfide-bonded. ATP is bound at residue Gly137. The interval 160 to 162 (RDQ) is interaction with tRNA. The active-site Cysteine persulfide intermediate is the Cys210.

It belongs to the MnmA/TRMU family.

The protein resides in the cytoplasm. The enzyme catalyses S-sulfanyl-L-cysteinyl-[protein] + uridine(34) in tRNA + AH2 + ATP = 2-thiouridine(34) in tRNA + L-cysteinyl-[protein] + A + AMP + diphosphate + H(+). In terms of biological role, catalyzes the 2-thiolation of uridine at the wobble position (U34) of tRNA, leading to the formation of s(2)U34. The polypeptide is tRNA-specific 2-thiouridylase MnmA (Rhodopseudomonas palustris (strain BisA53)).